A 491-amino-acid polypeptide reads, in one-letter code: Cytochrome P450 2B3 (491 aa).

A heme-binding site is contributed by Cys436.

Belongs to the cytochrome P450 family. It depends on heme as a cofactor. In terms of tissue distribution, liver. Not found in the lung, kidney and prostate.

The protein localises to the endoplasmic reticulum membrane. The protein resides in the microsome membrane. It catalyses the reaction an organic molecule + reduced [NADPH--hemoprotein reductase] + O2 = an alcohol + oxidized [NADPH--hemoprotein reductase] + H2O + H(+). Cytochromes P450 are a group of heme-thiolate monooxygenases. In liver microsomes, this enzyme is involved in an NADPH-dependent electron transport pathway. It oxidizes a variety of structurally unrelated compounds, including steroids, fatty acids, and xenobiotics. The chain is Cytochrome P450 2B3 (Cyp2b3) from Rattus norvegicus (Rat).